A 479-amino-acid chain; its full sequence is Aspartyl/glutamyl-tRNA(Asn/Gln) amidotransferase subunit B (479 aa).

Belongs to the GatB/GatE family. GatB subfamily. Heterotrimer of A, B and C subunits.

It carries out the reaction L-glutamyl-tRNA(Gln) + L-glutamine + ATP + H2O = L-glutaminyl-tRNA(Gln) + L-glutamate + ADP + phosphate + H(+). It catalyses the reaction L-aspartyl-tRNA(Asn) + L-glutamine + ATP + H2O = L-asparaginyl-tRNA(Asn) + L-glutamate + ADP + phosphate + 2 H(+). Functionally, allows the formation of correctly charged Asn-tRNA(Asn) or Gln-tRNA(Gln) through the transamidation of misacylated Asp-tRNA(Asn) or Glu-tRNA(Gln) in organisms which lack either or both of asparaginyl-tRNA or glutaminyl-tRNA synthetases. The reaction takes place in the presence of glutamine and ATP through an activated phospho-Asp-tRNA(Asn) or phospho-Glu-tRNA(Gln). This chain is Aspartyl/glutamyl-tRNA(Asn/Gln) amidotransferase subunit B, found in Streptococcus equi subsp. zooepidemicus (strain MGCS10565).